The sequence spans 168 residues: uncharacterized protein (168 aa).

A run of 2 helical transmembrane segments spans residues 27–47 (NWLV…RISG) and 147–167 (IENG…QVMF).

The protein localises to the membrane. This is an uncharacterized protein from Saccharomyces cerevisiae (strain ATCC 204508 / S288c) (Baker's yeast).